Reading from the N-terminus, the 368-residue chain is MIPGTDAYDIAIEISDADIERLLSVMPEDVEAASALSYCRNVFLPLTTACRYTCTYCTYYDPPGQAELMDREEIRETCRRGADAGCTEALFTFGDDPDDRYTAVHDQLAEWGHDSIHEYLREACEIALEEGLLPHANPGDQTREQMAHVADLNASMGVMLETTTEVQAHGGPRAKNPGQRLNTLRVAGELGVPFTTGILVGIGEDWHHRAESLLAIREMHERYGHIQEVIIQPVVENERWQGGSPDLATMRRVTAMARAALPEEVSVQVPPNLAPARDLTDCGIDDLGGVSPVTVDHINPEYEWPALQELTAVAEAAEVPLSERLPVYDHFVDDGWLSAPIEAAIEADNDAGDRFRSILDRGVNPVTL.

One can recognise a Radical SAM core domain in the interval 36–272; that stretch reads LSYCRNVFLP…EEVSVQVPPN (237 aa). The [4Fe-4S] cluster site is built by Cys-50, Cys-54, and Cys-57.

It belongs to the radical SAM superfamily. CofG family. As to quaternary structure, consists of two subunits, CofG and CofH. It depends on [4Fe-4S] cluster as a cofactor.

The catalysed reaction is 5-amino-5-(4-hydroxybenzyl)-6-(D-ribitylimino)-5,6-dihydrouracil + S-adenosyl-L-methionine = 7,8-didemethyl-8-hydroxy-5-deazariboflavin + 5'-deoxyadenosine + L-methionine + NH4(+) + H(+). The protein operates within cofactor biosynthesis; coenzyme F0 biosynthesis. In terms of biological role, catalyzes the radical-mediated synthesis of 7,8-didemethyl-8-hydroxy-5-deazariboflavin from 5-amino-5-(4-hydroxybenzyl)-6-(D-ribitylimino)-5,6-dihydrouracil. This is 7,8-didemethyl-8-hydroxy-5-deazariboflavin synthase from Haloarcula marismortui (strain ATCC 43049 / DSM 3752 / JCM 8966 / VKM B-1809) (Halobacterium marismortui).